We begin with the raw amino-acid sequence, 134 residues long: Cytochrome b (134 aa).

3 helical membrane passes run 33-53, 77-98, and 113-133; these read FGSL…FLAM, WLLR…YLHV, and WNIG…GYVL. Heme b is bound by residues His-83 and His-97.

It belongs to the cytochrome b family. As to quaternary structure, the cytochrome bc1 complex contains 11 subunits: 3 respiratory subunits (MT-CYB, CYC1 and UQCRFS1), 2 core proteins (UQCRC1 and UQCRC2) and 6 low-molecular weight proteins (UQCRH/QCR6, UQCRB/QCR7, UQCRQ/QCR8, UQCR10/QCR9, UQCR11/QCR10 and a cleavage product of UQCRFS1). This cytochrome bc1 complex then forms a dimer. The cofactor is heme b.

It is found in the mitochondrion inner membrane. Component of the ubiquinol-cytochrome c reductase complex (complex III or cytochrome b-c1 complex) that is part of the mitochondrial respiratory chain. The b-c1 complex mediates electron transfer from ubiquinol to cytochrome c. Contributes to the generation of a proton gradient across the mitochondrial membrane that is then used for ATP synthesis. The sequence is that of Cytochrome b (MT-CYB) from Chiroderma salvini (Salvin's big-eyed bat).